The primary structure comprises 460 residues: MHSPPRDQAAIMLWKLVENVKYEDIYEDRHDGVPSHSSRLSQLGSVSQGPYSSAPPLSHTPSSDFQPPYFPPPYQPLPYHQSQDPYSHVNDPYSLNPLHQPQQHPWGQRQRQEVGSEAGSLLPQPRAALPQLSGLDPRRDYHSVRRPDVLLHSAHHGLDAGMGDSLSLHGLGHPGMEDVQSVEDANNSGMNLLDQSVIKKVPVPPKSVTSLMMNKDGFLGGMSVNTGEVFCSVPGRLSLLSSTSKYKVTVGEVQRRLSPPECLNASLLGGVLRRAKSKNGGRSLRERLEKIGLNLPAGRRKAANVTLLTSLVEGEAVHLARDFGYICETEFPAKAVSEYLNRQHTDPSDLHSRKNMLLATKQLCKEFTDLLAQDRTPIGNSRPSPILEPGIQSCLTHFSLITHGFGAPAICAALTALQNYLTEALKGMDKMFLNNTTTNRHTSGEGPGSKTGDKEEKHRK.

K21 participates in a covalent cross-link: Glycyl lysine isopeptide (Lys-Gly) (interchain with G-Cter in SUMO). The tract at residues 30-139 (HDGVPSHSSR…PQLSGLDPRR (110 aa)) is disordered. A compositionally biased stretch (polar residues) spans 35-51 (SHSSRLSQLGSVSQGPY). Over residues 121–132 (LLPQPRAALPQL) the composition is skewed to low complexity. Residue S258 is modified to Phosphoserine; by PKA. Residues 435 to 460 (NTTTNRHTSGEGPGSKTGDKEEKHRK) are disordered. Positions 451–460 (TGDKEEKHRK) are enriched in basic and acidic residues.

It belongs to the AP-2 family. Binds DNA as a dimer. Can form homodimers or heterodimers with other AP-2 family members. Interacts with CITED4. Interacts with UBE2I. Interacts with KCTD1; this interaction represses transcription activation. Interacts with CITED2 (via C-terminus); the interaction stimulates TFAP2B-transcriptional activity. Sumoylated on Lys-21; which inhibits transcriptional activity.

It localises to the nucleus. Sequence-specific DNA-binding protein that interacts with inducible viral and cellular enhancer elements to regulate transcription of selected genes. AP-2 factors bind to the consensus sequence 5'-GCCNNNGGC-3' and activate genes involved in a large spectrum of important biological functions including proper eye, face, body wall, limb and neural tube development. They also suppress a number of genes including MCAM/MUC18, C/EBP alpha and MYC. AP-2-beta appears to be required for normal face and limb development and for proper terminal differentiation and function of renal tubular epithelia. The polypeptide is Transcription factor AP-2-beta (TFAP2B) (Canis lupus familiaris (Dog)).